A 663-amino-acid chain; its full sequence is RING finger protein 145 (663 aa).

A run of 14 helical transmembrane segments spans residues 53–73, 77–97, 123–143, 146–166, 168–188, 205–222, 225–245, 275–295, 316–336, 340–360, 384–404, 410–430, 460–480, and 482–502; these read YLAL…LTLP, LVQL…HQIS, FTTA…VMKT, IWLF…VPLE, IVII…YFLG, LVQV…MSLW, LVVP…QIYS, YSLL…LTLC, TEGV…LQVV, FLLS…MLEI, SLCL…CQFF, LLII…TLFI, LLEF…TIFG, and WTVM…WLRA. Residues 81 to 84 carry the YLYF motif motif; sequence YLYF. Cys-537 is an active-site residue. The RING-type; atypical zinc-finger motif lies at 537–575; the sequence is CAICYQDMKSAVITPCSHFFHAGCLKKWLYVQETCPLCH. Residues 607-663 form a disordered region; sequence EGTEPPGQEHTPGTRIQEGSRDNNEYIARRPDNQEGAFDPKEYPHSAKDEAHPVESA. Positions 624-663 are enriched in basic and acidic residues; the sequence is EGSRDNNEYIARRPDNQEGAFDPKEYPHSAKDEAHPVESA.

As to quaternary structure, interacts (via YLYF motif) with INSIG1 and INSIG2.

It localises to the endoplasmic reticulum membrane. It catalyses the reaction S-ubiquitinyl-[E2 ubiquitin-conjugating enzyme]-L-cysteine + [acceptor protein]-L-lysine = [E2 ubiquitin-conjugating enzyme]-L-cysteine + N(6)-ubiquitinyl-[acceptor protein]-L-lysine.. Its function is as follows. E3 ubiquitin ligase that catalyzes the direct transfer of ubiquitin from E2 ubiquitin-conjugating enzyme to a specific substrate. In response to bacterial infection, negatively regulates the phagocyte oxidative burst by controlling the turnover of the NADPH oxidase complex subunits. Promotes monoubiquitination of CYBA and 'Lys-48'-linked polyubiquitination and degradation of CYBB NADPH oxidase catalytic subunits, both essential for the generation of antimicrobial reactive oxygen species. Involved in the maintenance of cholesterol homeostasis. In response to high sterol concentrations ubiquitinates HMGCR, a rate-limiting enzyme in cholesterol biosynthesis, and targets it for degradation. The interaction with INSIG1 is required for this function. In addition, triggers ubiquitination of SCAP, likely inhibiting its transport to the Golgi apparatus and the subsequent processing/maturation of SREBPF2, ultimately down-regulating cholesterol biosynthesis. This is RING finger protein 145 from Homo sapiens (Human).